Here is a 169-residue protein sequence, read N- to C-terminus: Zinc metalloproteinase-disintegrin-like mikarin (169 aa).

Residues 14-57 (KYLEYVVVDNNMYRNYGNAGPCVMSAEISFEPLQEFSSCDIQEP) enclose the Peptidase M12B domain. A Disintegrin domain is found at 65-129 (PAVCGNYYVE…PEICTGRSAK (65 aa)). 6 disulfides stabilise this stretch: Cys68–Cys97, Cys79–Cys92, Cys81–Cys87, Cys105–Cys111, Cys110–Cys123, and Cys150–Cys161. Residues 116–118 (DCD) carry the D/ECD-tripeptide motif.

This sequence belongs to the venom metalloproteinase (M12B) family. P-III subfamily. P-IIIa sub-subfamily. In terms of assembly, monomer. It depends on Zn(2+) as a cofactor. In terms of tissue distribution, expressed by the venom gland.

Its subcellular location is the secreted. Inhibited by EDTA, but not by PMSF. Snake venom zinc metalloproteinase that calcium-independently catalyzes the conversion of prothrombin (F2) to alpha-thrombin through the formation of a thrombin intermediate. This chain is Zinc metalloproteinase-disintegrin-like mikarin, found in Micropechis ikaheca (New Guinean small-eyed snake).